Consider the following 293-residue polypeptide: Undecaprenyl-diphosphatase (293 aa).

8 helical membrane passes run 3–23 (IALALKAVILGIVEGLTEFLP), 43–63 (KGKIFEIVIQFGAILAVCWEF), 85–105 (VNVIVATIPAIVLALVFGKWI), 109–129 (LFNPITVATAFIIGGVVILLA), 178–198 (FALVPGTSRSGATIIGGMLFG), 203–223 (VATEFSFFLAIPVIFGATVYE), 238–258 (IFAVGFVFAFLSAFLCVRWLL), and 269–289 (FAWYRIAFGIIVLLTAWTGVI).

It belongs to the UppP family.

Its subcellular location is the cell inner membrane. It carries out the reaction di-trans,octa-cis-undecaprenyl diphosphate + H2O = di-trans,octa-cis-undecaprenyl phosphate + phosphate + H(+). Catalyzes the dephosphorylation of undecaprenyl diphosphate (UPP). Confers resistance to bacitracin. In Cupriavidus metallidurans (strain ATCC 43123 / DSM 2839 / NBRC 102507 / CH34) (Ralstonia metallidurans), this protein is Undecaprenyl-diphosphatase.